A 350-amino-acid polypeptide reads, in one-letter code: RING finger protein 44 (350 aa).

The RING-type; atypical zinc finger occupies 298–339 (CVVCFSDFEVRQLLRVLPCNHEFHAKCVDKWLKANRTCPICR).

This is RING finger protein 44 (Rnf44) from Rattus norvegicus (Rat).